A 501-amino-acid polypeptide reads, in one-letter code: MYVDMNREYLKDINTTEDVKIPEDPLERVIGHEDVMPMIKIAAKQRRHLLLVGPPGIGKSLLAQAISFHLPEPSEEITVVHNPERPERPFVEIKNRKEIEDEILEIERAEGELIDPQSAPDAVAERLGFKCIHCGEYSSAYNSICPRCGGDKFSHIKARRKHIGDLLGMFEMSSGSLSVPQKRVTTTRIIDGVEEVVIYERVGGEEIKVLDQRALEKRRQIVEEKPRNVIVPLDRKTFVQATGASETELLGDVRHDPYGGHPDLGSQPYERVVPGAIHEAHEGVLFIDEIVHIAGLQRFIFSAMQDKTFPIVGRNPQSAGSSVKVDEVPCDFIFVGACNIADLQYILPPLRSRIQGEGYELLLNTTMPDTDENRAKIAQFVAQEIELDGKIPHARAAAVELLIEEARRRARAVDDVDNALTLRLRDLGGVVRMAGDLAVMDGSPYIETRHMEVAIRKAVSVEDQIIRRYKSYEKALEKDLSSSQRMSQHGYSSENIDRSYM.

53-60 (GPPGIGKS) is a binding site for ATP. The segment covering 481-494 (SSSQRMSQHGYSSE) has biased composition (polar residues). The disordered stretch occupies residues 481-501 (SSSQRMSQHGYSSENIDRSYM).

This sequence belongs to the peptidase S16 family.

The chain is Putative lon protease homolog from Methanothermobacter thermautotrophicus (strain ATCC 29096 / DSM 1053 / JCM 10044 / NBRC 100330 / Delta H) (Methanobacterium thermoautotrophicum).